Here is a 338-residue protein sequence, read N- to C-terminus: Large ribosomal subunit protein uL10 (338 aa).

Positions 302–338 (IAAQPQPAEEAEEKVEEEEEEEKEEEEALAGLGALFG) are disordered. The span at 310–329 (EEAEEKVEEEEEEEKEEEEA) shows a compositional bias: acidic residues.

This sequence belongs to the universal ribosomal protein uL10 family. Part of the 50S ribosomal subunit. Forms part of the ribosomal stalk which helps the ribosome interact with GTP-bound translation factors. Forms a heptameric L10(L12)2(L12)2(L12)2 complex, where L10 forms an elongated spine to which the L12 dimers bind in a sequential fashion.

Forms part of the ribosomal stalk, playing a central role in the interaction of the ribosome with GTP-bound translation factors. The sequence is that of Large ribosomal subunit protein uL10 from Thermococcus sibiricus (strain DSM 12597 / MM 739).